The following is a 317-amino-acid chain: uncharacterized protein (317 aa).

The protein belongs to the asfivirus F317L family.

Its subcellular location is the virion. This is an uncharacterized protein from African swine fever virus (strain Badajoz 1971 Vero-adapted) (Ba71V).